The following is a 476-amino-acid chain: Aspartyl/glutamyl-tRNA(Asn/Gln) amidotransferase subunit B (476 aa).

It belongs to the GatB/GatE family. GatB subfamily. Heterotrimer of A, B and C subunits.

The enzyme catalyses L-glutamyl-tRNA(Gln) + L-glutamine + ATP + H2O = L-glutaminyl-tRNA(Gln) + L-glutamate + ADP + phosphate + H(+). It carries out the reaction L-aspartyl-tRNA(Asn) + L-glutamine + ATP + H2O = L-asparaginyl-tRNA(Asn) + L-glutamate + ADP + phosphate + 2 H(+). Its function is as follows. Allows the formation of correctly charged Asn-tRNA(Asn) or Gln-tRNA(Gln) through the transamidation of misacylated Asp-tRNA(Asn) or Glu-tRNA(Gln) in organisms which lack either or both of asparaginyl-tRNA or glutaminyl-tRNA synthetases. The reaction takes place in the presence of glutamine and ATP through an activated phospho-Asp-tRNA(Asn) or phospho-Glu-tRNA(Gln). The sequence is that of Aspartyl/glutamyl-tRNA(Asn/Gln) amidotransferase subunit B from Moorella thermoacetica (strain ATCC 39073 / JCM 9320).